The chain runs to 218 residues: uncharacterized protein (218 aa).

The RING-type zinc finger occupies 154–199 (CFICTMEYSRTDKNLHPIILNCGHNLCRSCINKLTGNGIVKCPFDR).

This is an uncharacterized protein from Caenorhabditis elegans.